Reading from the N-terminus, the 201-residue chain is Cell division protein SepF (201 aa).

The span at 27-38 (VQERTSVQRDSR) shows a compositional bias: basic and acidic residues. Residues 27–99 (VQERTSVQRD…PRIQNKDSVR (73 aa)) form a disordered region. Composition is skewed to polar residues over residues 43 to 54 (QEASQRSHMTNS) and 82 to 92 (DNSYQQATPRI).

The protein belongs to the SepF family. Homodimer. Interacts with FtsZ.

It localises to the cytoplasm. In terms of biological role, cell division protein that is part of the divisome complex and is recruited early to the Z-ring. Probably stimulates Z-ring formation, perhaps through the cross-linking of FtsZ protofilaments. Its function overlaps with FtsA. This is Cell division protein SepF from Streptococcus agalactiae serotype III (strain NEM316).